Reading from the N-terminus, the 594-residue chain is Laccase-2 (594 aa).

An N-terminal signal peptide occupies residues 1–20; that stretch reads MGGIIKLSFLFCSLISLVNS. A glycan (N-linked (GlcNAc...) asparagine) is linked at Asn67. Plastocyanin-like domains follow at residues 70–183 and 195–357; these read EALA…HSPN and DRIV…RYTG. His117 and His119 together coordinate Cu cation. Asn124 carries N-linked (GlcNAc...) asparagine glycosylation. Cys138 and Cys578 are joined by a disulfide. Cu cation-binding residues include His162 and His164. Residues Asn242, Asn286, Asn320, Asn358, Asn397, Asn430, Asn452, and Asn458 are each glycosylated (N-linked (GlcNAc...) asparagine). Residues 466–563 enclose the Plastocyanin-like 3 domain; that stretch reads PVNIIINNLD…KMAVVVVQPE (98 aa). Residues His480, His483, and His485 each contribute to the Cu cation site. Asn508 is a glycosylation site (N-linked (GlcNAc...) asparagine). His543, Cys544, His545, and His549 together coordinate Cu cation.

Belongs to the multicopper oxidase family. Cu cation is required as a cofactor.

It is found in the secreted. The protein localises to the cell wall. The catalysed reaction is 4 hydroquinone + O2 = 4 benzosemiquinone + 2 H2O. Functionally, laccase that catalyzes the oxidation of certain aromatic compounds, including L-dopa, to quinones, which then polymerize to melanin. Able to oxidize a wide variety of aromatic diphenol and diamino groups in the ortho, meta, and para positions but not monophenolic groups such as in phenol, tyramine, or tyrosine. Plays an important role in virulence. Plays a role in dissemination to extrapulmonary sites but is not involved in pulmonary growth or in elicitation of cellular immune responses in the lung. This is Laccase-2 (LAC2) from Cryptococcus neoformans var. grubii serotype A (strain H99 / ATCC 208821 / CBS 10515 / FGSC 9487) (Filobasidiella neoformans var. grubii).